The primary structure comprises 237 residues: Pyridoxine 5'-phosphate synthase (237 aa).

Asn-7 and Arg-18 together coordinate 3-amino-2-oxopropyl phosphate. His-43 serves as the catalytic Proton acceptor. Residues Arg-45 and His-50 each contribute to the 1-deoxy-D-xylulose 5-phosphate site. The active-site Proton acceptor is Glu-70. Thr-100 lines the 1-deoxy-D-xylulose 5-phosphate pocket. The active-site Proton donor is His-190. 3-amino-2-oxopropyl phosphate contacts are provided by residues Asp-191 and 213-214 (GH).

It belongs to the PNP synthase family. As to quaternary structure, homooctamer; tetramer of dimers.

Its subcellular location is the cytoplasm. The enzyme catalyses 3-amino-2-oxopropyl phosphate + 1-deoxy-D-xylulose 5-phosphate = pyridoxine 5'-phosphate + phosphate + 2 H2O + H(+). The protein operates within cofactor biosynthesis; pyridoxine 5'-phosphate biosynthesis; pyridoxine 5'-phosphate from D-erythrose 4-phosphate: step 5/5. Catalyzes the complicated ring closure reaction between the two acyclic compounds 1-deoxy-D-xylulose-5-phosphate (DXP) and 3-amino-2-oxopropyl phosphate (1-amino-acetone-3-phosphate or AAP) to form pyridoxine 5'-phosphate (PNP) and inorganic phosphate. The chain is Pyridoxine 5'-phosphate synthase from Christiangramia forsetii (strain DSM 17595 / CGMCC 1.15422 / KT0803) (Gramella forsetii).